A 682-amino-acid polypeptide reads, in one-letter code: Potassium-transporting ATPase ATP-binding subunit (682 aa).

Transmembrane regions (helical) follow at residues 35–55, 62–82, 219–239, and 254–274; these read VMFI…AMAG, ATFT…ANFA, IALT…TATI, and VLVA…LSAI. Aspartate 307 (4-aspartylphosphate intermediate) is an active-site residue. Residues aspartate 344, glutamate 348, 377–384, and lysine 395 contribute to the ATP site; that span reads FTAQTRMS. Mg(2+)-binding residues include aspartate 518 and aspartate 522. Helical transmembrane passes span 588-608, 616-636, and 656-676; these read FAII…LNVM, AILS…PLAL, and IYGL…DLLL.

This sequence belongs to the cation transport ATPase (P-type) (TC 3.A.3) family. Type IA subfamily. As to quaternary structure, the system is composed of three essential subunits: KdpA, KdpB and KdpC.

The protein localises to the cell inner membrane. It catalyses the reaction K(+)(out) + ATP + H2O = K(+)(in) + ADP + phosphate + H(+). Part of the high-affinity ATP-driven potassium transport (or Kdp) system, which catalyzes the hydrolysis of ATP coupled with the electrogenic transport of potassium into the cytoplasm. This subunit is responsible for energy coupling to the transport system and for the release of the potassium ions to the cytoplasm. The polypeptide is Potassium-transporting ATPase ATP-binding subunit (Klebsiella pneumoniae (strain 342)).